The following is a 985-amino-acid chain: Regulator of telomere elongation helicase 1 homolog (985 aa).

Positions 7–303 (AGIPVHFPFE…QDMAGDEPKD (297 aa)) constitute a Helicase ATP-binding domain. 42–49 (SPTGTGKT) is a binding site for ATP. [4Fe-4S] cluster is bound by residues C146, C164, C173, and C209. The DEAH box signature appears at 252–255 (DEAH). The interval 863 to 883 (VKIHKRERSSPTAPESSSQVT) is disordered. A compositionally biased stretch (polar residues) spans 872–882 (SPTAPESSSQV). T874 carries the post-translational modification Phosphothreonine.

It belongs to the helicase family. RAD3/XPD subfamily. In terms of tissue distribution, expressed in both male germline and somatic cells (at protein level). Expressed in ovarian germline stem cells (at protein level). Expressed in adult testes (at protein level). Expressed in the germarium including germline stem cells.

It is found in the nucleus. The protein localises to the chromosome. The enzyme catalyses ATP + H2O = ADP + phosphate + H(+). In terms of biological role, a probable ATP-dependent DNA helicase implicated in DNA repair and the maintenance of genomic stability. Acts as an anti-recombinase to counteract toxic recombination and limit crossover during meiosis. Regulates meiotic recombination and crossover homeostasis by physically dissociating strand invasion events and thereby promotes noncrossover repair by meiotic synthesis dependent strand annealing (SDSA) as well as disassembly of D loop recombination intermediates. In male germline stem cells (GSCs), plays a role in GSCs maintenance during larval germline development by modulating the expression of genes such as Stat92E and preventing DNA damage-induced checkpoint activation. May play a role in female germline stem cell maintenance. The protein is Regulator of telomere elongation helicase 1 homolog of Drosophila melanogaster (Fruit fly).